A 101-amino-acid polypeptide reads, in one-letter code: NAD(P)H-quinone oxidoreductase subunit 4L, chloroplastic (101 aa).

Helical transmembrane passes span 2–22 (ILEH…YGLI), 32–52 (MCLE…SDFF), and 61–81 (IFCI…LAIV).

Belongs to the complex I subunit 4L family. As to quaternary structure, NDH is composed of at least 16 different subunits, 5 of which are encoded in the nucleus.

The protein localises to the plastid. The protein resides in the chloroplast thylakoid membrane. The catalysed reaction is a plastoquinone + NADH + (n+1) H(+)(in) = a plastoquinol + NAD(+) + n H(+)(out). It catalyses the reaction a plastoquinone + NADPH + (n+1) H(+)(in) = a plastoquinol + NADP(+) + n H(+)(out). In terms of biological role, NDH shuttles electrons from NAD(P)H:plastoquinone, via FMN and iron-sulfur (Fe-S) centers, to quinones in the photosynthetic chain and possibly in a chloroplast respiratory chain. The immediate electron acceptor for the enzyme in this species is believed to be plastoquinone. Couples the redox reaction to proton translocation, and thus conserves the redox energy in a proton gradient. The polypeptide is NAD(P)H-quinone oxidoreductase subunit 4L, chloroplastic (Aethionema cordifolium (Lebanon stonecress)).